We begin with the raw amino-acid sequence, 139 residues long: D-ribose pyranase (139 aa).

His20 acts as the Proton donor in catalysis. Substrate contacts are provided by residues Asp28, His106, and 128–130; that span reads YAN.

It belongs to the RbsD / FucU family. RbsD subfamily. In terms of assembly, homodecamer.

The protein localises to the cytoplasm. The catalysed reaction is beta-D-ribopyranose = beta-D-ribofuranose. Its pathway is carbohydrate metabolism; D-ribose degradation; D-ribose 5-phosphate from beta-D-ribopyranose: step 1/2. Its function is as follows. Catalyzes the interconversion of beta-pyran and beta-furan forms of D-ribose. The chain is D-ribose pyranase from Escherichia coli O127:H6 (strain E2348/69 / EPEC).